The chain runs to 205 residues: MTKRNEAKYKIDRRMGQNIWGRPKSPVNKREYGPGQHGQRRKGKLSDFGTQLRAKQKLKGYYGNISERQFYAIYVEATRMKGDSGENLIGLLERRLDTVVYRAKFVPTIFAARQFINHGHVKVNGRRVNIPSYKLKVGDTVEVKDASKQLALVLEANQLAERDVPDFIDADHNKQSAKFIRIPQLADVPFAVQMEPHLIVEFYSR.

Positions 18 to 49 are disordered; that stretch reads NIWGRPKSPVNKREYGPGQHGQRRKGKLSDFG. The region spanning 94 to 157 is the S4 RNA-binding domain; that stretch reads RRLDTVVYRA…KQLALVLEAN (64 aa).

Belongs to the universal ribosomal protein uS4 family. In terms of assembly, part of the 30S ribosomal subunit. Contacts protein S5. The interaction surface between S4 and S5 is involved in control of translational fidelity.

Functionally, one of the primary rRNA binding proteins, it binds directly to 16S rRNA where it nucleates assembly of the body of the 30S subunit. In terms of biological role, with S5 and S12 plays an important role in translational accuracy. The polypeptide is Small ribosomal subunit protein uS4 (Nitrobacter winogradskyi (strain ATCC 25391 / DSM 10237 / CIP 104748 / NCIMB 11846 / Nb-255)).